The chain runs to 293 residues: Ribosomal protein L11 methyltransferase (293 aa).

S-adenosyl-L-methionine is bound by residues threonine 145, glycine 166, aspartate 188, and asparagine 230.

This sequence belongs to the methyltransferase superfamily. PrmA family.

The protein localises to the cytoplasm. It catalyses the reaction L-lysyl-[protein] + 3 S-adenosyl-L-methionine = N(6),N(6),N(6)-trimethyl-L-lysyl-[protein] + 3 S-adenosyl-L-homocysteine + 3 H(+). Functionally, methylates ribosomal protein L11. This Shewanella baltica (strain OS155 / ATCC BAA-1091) protein is Ribosomal protein L11 methyltransferase.